The following is a 196-amino-acid chain: Probable malonic semialdehyde reductase RutE (196 aa).

Belongs to the nitroreductase family. HadB/RutE subfamily. FMN is required as a cofactor.

The enzyme catalyses 3-hydroxypropanoate + NADP(+) = 3-oxopropanoate + NADPH + H(+). Functionally, may reduce toxic product malonic semialdehyde to 3-hydroxypropionic acid, which is excreted. The polypeptide is Probable malonic semialdehyde reductase RutE (Shigella dysenteriae serotype 1 (strain Sd197)).